Consider the following 107-residue polypeptide: Iron-binding protein IscA (107 aa).

The Fe cation site is built by Cys-35, Cys-99, and Cys-101.

The protein belongs to the HesB/IscA family. Homodimer; may form tetramers and higher multimers. The cofactor is Fe cation.

In terms of biological role, is able to transfer iron-sulfur clusters to apo-ferredoxin. Multiple cycles of [2Fe2S] cluster formation and transfer are observed, suggesting that IscA acts catalytically. Recruits intracellular free iron so as to provide iron for the assembly of transient iron-sulfur cluster in IscU in the presence of IscS, L-cysteine and the thioredoxin reductase system TrxA/TrxB. The protein is Iron-binding protein IscA of Enterobacter sp. (strain 638).